Reading from the N-terminus, the 362-residue chain is Phospho-2-dehydro-3-deoxyheptonate aldolase (362 aa).

The protein belongs to the class-I DAHP synthase family.

The enzyme catalyses D-erythrose 4-phosphate + phosphoenolpyruvate + H2O = 7-phospho-2-dehydro-3-deoxy-D-arabino-heptonate + phosphate. It participates in metabolic intermediate biosynthesis; chorismate biosynthesis; chorismate from D-erythrose 4-phosphate and phosphoenolpyruvate: step 1/7. Stereospecific condensation of phosphoenolpyruvate (PEP) and D-erythrose-4-phosphate (E4P) giving rise to 3-deoxy-D-arabino-heptulosonate-7-phosphate (DAHP). This Haemophilus influenzae (strain ATCC 51907 / DSM 11121 / KW20 / Rd) protein is Phospho-2-dehydro-3-deoxyheptonate aldolase (aroG).